The primary structure comprises 172 residues: MDLKQYVSEVKDWPSAGVSFKDITTIMDNGEAYGYATDQIVEYAKEKNIDIVVGPEARGFIIGCPVAYSMGIGFAPVRKEGKLPREVIRYEYNLEYGTNVLTMHKDAIKPGQRVLITDDLLATGGTIEAAIKLVEQLGGIVVGIAFIIELKYLNGIDKIKDYDVMSLISYDE.

Belongs to the purine/pyrimidine phosphoribosyltransferase family. As to quaternary structure, homodimer.

It is found in the cytoplasm. The catalysed reaction is AMP + diphosphate = 5-phospho-alpha-D-ribose 1-diphosphate + adenine. It participates in purine metabolism; AMP biosynthesis via salvage pathway; AMP from adenine: step 1/1. Functionally, catalyzes a salvage reaction resulting in the formation of AMP, that is energically less costly than de novo synthesis. The sequence is that of Adenine phosphoribosyltransferase from Staphylococcus epidermidis (strain ATCC 35984 / DSM 28319 / BCRC 17069 / CCUG 31568 / BM 3577 / RP62A).